The following is a 282-amino-acid chain: ATP synthase gamma chain (282 aa).

It belongs to the ATPase gamma chain family. As to quaternary structure, F-type ATPases have 2 components, CF(1) - the catalytic core - and CF(0) - the membrane proton channel. CF(1) has five subunits: alpha(3), beta(3), gamma(1), delta(1), epsilon(1). CF(0) has three main subunits: a, b and c.

Its subcellular location is the cell membrane. Functionally, produces ATP from ADP in the presence of a proton gradient across the membrane. The gamma chain is believed to be important in regulating ATPase activity and the flow of protons through the CF(0) complex. The chain is ATP synthase gamma chain from Clostridium acetobutylicum (strain ATCC 824 / DSM 792 / JCM 1419 / IAM 19013 / LMG 5710 / NBRC 13948 / NRRL B-527 / VKM B-1787 / 2291 / W).